The chain runs to 604 residues: Proline--tRNA ligase (604 aa).

This sequence belongs to the class-II aminoacyl-tRNA synthetase family. ProS type 1 subfamily. Homodimer.

The protein resides in the cytoplasm. The enzyme catalyses tRNA(Pro) + L-proline + ATP = L-prolyl-tRNA(Pro) + AMP + diphosphate. Its function is as follows. Catalyzes the attachment of proline to tRNA(Pro) in a two-step reaction: proline is first activated by ATP to form Pro-AMP and then transferred to the acceptor end of tRNA(Pro). As ProRS can inadvertently accommodate and process non-cognate amino acids such as alanine and cysteine, to avoid such errors it has two additional distinct editing activities against alanine. One activity is designated as 'pretransfer' editing and involves the tRNA(Pro)-independent hydrolysis of activated Ala-AMP. The other activity is designated 'posttransfer' editing and involves deacylation of mischarged Ala-tRNA(Pro). The misacylated Cys-tRNA(Pro) is not edited by ProRS. The chain is Proline--tRNA ligase from Nostoc punctiforme (strain ATCC 29133 / PCC 73102).